Here is a 648-residue protein sequence, read N- to C-terminus: Chaperone protein HtpG (648 aa).

Residues 1–353 form an a; substrate-binding region; it reads MNARVEQLEF…AQDMSLNVSR (353 aa). The segment at 354–567 is b; that stretch reads EILQQDRQIK…TFGITPALAR (214 aa). The segment at 568-648 is c; it reads IYRATGQDVP…LLADRLTRTL (81 aa).

It belongs to the heat shock protein 90 family. In terms of assembly, homodimer.

It localises to the cytoplasm. Its function is as follows. Molecular chaperone. Has ATPase activity. This chain is Chaperone protein HtpG, found in Mycobacterium ulcerans (strain Agy99).